The primary structure comprises 148 residues: 3-dehydroquinate dehydratase (148 aa).

Residue Tyr-23 is the Proton acceptor of the active site. Substrate is bound by residues Asn-74, His-80, and Asp-87. His-100 (proton donor) is an active-site residue. Residues 101–102 (IS) and Arg-111 each bind substrate.

It belongs to the type-II 3-dehydroquinase family. In terms of assembly, homododecamer.

It catalyses the reaction 3-dehydroquinate = 3-dehydroshikimate + H2O. Its pathway is metabolic intermediate biosynthesis; chorismate biosynthesis; chorismate from D-erythrose 4-phosphate and phosphoenolpyruvate: step 3/7. In terms of biological role, catalyzes a trans-dehydration via an enolate intermediate. The chain is 3-dehydroquinate dehydratase from Halothermothrix orenii (strain H 168 / OCM 544 / DSM 9562).